Reading from the N-terminus, the 292-residue chain is Elongation factor Ts (292 aa).

Residues 80–83 form an involved in Mg(2+) ion dislocation from EF-Tu region; it reads TDFV.

It belongs to the EF-Ts family.

The protein resides in the cytoplasm. Functionally, associates with the EF-Tu.GDP complex and induces the exchange of GDP to GTP. It remains bound to the aminoacyl-tRNA.EF-Tu.GTP complex up to the GTP hydrolysis stage on the ribosome. This is Elongation factor Ts from Ralstonia nicotianae (strain ATCC BAA-1114 / GMI1000) (Ralstonia solanacearum).